A 145-amino-acid polypeptide reads, in one-letter code: 3-hydroxyacyl-[acyl-carrier-protein] dehydratase FabZ (145 aa).

His-48 is a catalytic residue.

It belongs to the thioester dehydratase family. FabZ subfamily.

It localises to the cytoplasm. The enzyme catalyses a (3R)-hydroxyacyl-[ACP] = a (2E)-enoyl-[ACP] + H2O. In terms of biological role, involved in unsaturated fatty acids biosynthesis. Catalyzes the dehydration of short chain beta-hydroxyacyl-ACPs and long chain saturated and unsaturated beta-hydroxyacyl-ACPs. This is 3-hydroxyacyl-[acyl-carrier-protein] dehydratase FabZ from Cellvibrio japonicus (strain Ueda107) (Pseudomonas fluorescens subsp. cellulosa).